The primary structure comprises 194 residues: Cysteine and glycine-rich protein 3 (194 aa).

The tract at residues 1–5 (MPNWG) is interaction with TCAP. Residues 10–61 (CGACEKTVYHAEEIQCNGRSFHKTCFHCMACRKALDSTTVAAHESEIYCKVC) form the LIM zinc-binding 1 domain. A Nuclear localization signal motif is present at residues 64-69 (RRYGPK). The interaction with CLF2 and isoform 2 stretch occupies residues 94–105 (QSPKPARSVTTS). Ser95 and Ser153 each carry phosphoserine. Positions 120–171 (CPRCGKSVYAAEKVMGGGKPWHKTCFRCAICGKSLESTNVTDKDGELYCKVC) constitute an LIM zinc-binding 2 domain.

As to quaternary structure, self-associates. Oligomeric in the cytoplasm and monomeric in the nucleus. Homooligomers preferentially form along the actin cytoskeleton. Isoform 2 interacts with isoform 1. Isoform 1 but not isoform 2 interacts with MYOD1 and MYOG. Isoform 1 interacts with TCAP, ACTN2 and NRAP. Isoform 2 interacts with TCAP and alpha-actinin. Interacts with LDHD. Interacts (via N-terminus)with GLRX3 (via C-terminus) and PPP3CA; GLRX3 and calcineurin compete for interaction with CSRP3. Interacts with MYF6. Interacts with CFL2; the stoichiometry influences F-actin depolymerization and possibly two molecules of CFL2 can interact with one molecule of CSRP3 resulting in the highest functional impact; the interaction is stronger with phosphorylated CFL2. Phosphorylated by PKC/PRKCA. As to expression, cardiac and slow-twitch skeletal muscles. Isoform 2 is expressed in striated muscle. Isoform 2 is specifically expressed at higher levels in patients with neuromuscular diseases, such as limb-girdle muscular dystrophy 2A (LGMD2A), Duchenne muscular dystrophy (DMD) and dermatomyositis.

The protein localises to the nucleus. It localises to the cytoplasm. It is found in the cytoskeleton. The protein resides in the myofibril. Its subcellular location is the sarcomere. The protein localises to the z line. Its function is as follows. Positive regulator of myogenesis. Acts as a cofactor for myogenic bHLH transcription factors such as MYOD1, and probably MYOG and MYF6. Enhances the DNA-binding activity of the MYOD1:TCF3 isoform E47 complex and may promote formation of a functional MYOD1:TCF3 isoform E47:MEF2A complex involved in myogenesis. Plays a crucial and specific role in the organization of cytosolic structures in cardiomyocytes. Could play a role in mechanical stretch sensing. May be a scaffold protein that promotes the assembly of interacting proteins at Z-line structures. It is essential for calcineurin anchorage to the Z line. Required for stress-induced calcineurin-NFAT activation. The role in regulation of cytoskeleton dynamics by association with CFL2 is reported conflictingly: Shown to enhance CFL2-mediated F-actin depolymerization dependent on the CSRP3:CFL2 molecular ratio, and also shown to reduce the ability of CLF1 and CFL2 to enhance actin depolymerization. Proposed to contribute to the maintenance of muscle cell integrity through an actin-based mechanism. Can directly bind to actin filaments, cross-link actin filaments into bundles without polarity selectivity and protect them from dilution- and cofilin-mediated depolymerization; the function seems to involve its self-association. In vitro can inhibit PKC/PRKCA activity. Proposed to be involved in cardiac stress signaling by down-regulating excessive PKC/PRKCA signaling. Functionally, may play a role in early sarcomere organization. Overexpression in myotubes negatively regulates myotube differentiation. By association with isoform 1 and thus changing the CSRP3 isoform 1:CFL2 stoichiometry is proposed to down-regulate CFL2-mediated F-actin depolymerization. The polypeptide is Cysteine and glycine-rich protein 3 (CSRP3) (Homo sapiens (Human)).